A 190-amino-acid chain; its full sequence is Riboflavin transporter FmnP (190 aa).

Over 1–5 (MKVKK) the chain is Extracellular. Residues 6–26 (LVVVSMLSSIAFVLMLLNFPF) traverse the membrane as a helical segment. Residues 27 to 39 (PGLPDYLKIDFSD) lie on the Cytoplasmic side of the membrane. Residues 40-60 (VPAIIAILIYGPLAGIAVEAI) form a helical membrane-spanning segment. Over 61–76 (KNVLQYIIQGSMAGVP) the chain is Extracellular. Residues 77–97 (VGQVANFIAGTLFILPTAFLF) traverse the membrane as a helical segment. Topologically, residues 98–109 (KKLNSAKGLAVS) are cytoplasmic. Residues 110–130 (LLLGTAAMTILMSILNYVLIL) traverse the membrane as a helical segment. Residues 131 to 154 (PAYTWFLHSPALSDSALKTAVVAG) are Extracellular-facing. Residues 155-175 (ILPFNMIKGIVITVVFSLIFI) form a helical membrane-spanning segment. The Cytoplasmic segment spans residues 176–190 (KLKPWIEQQRSAHIH).

It belongs to the prokaryotic riboflavin transporter (P-RFT) (TC 2.A.87) family. As to quaternary structure, forms a stable energy-coupling factor (ECF) transporter complex composed of a membrane-embedded substrate-binding protein (S component), 2 ATP-binding proteins (A component) and 2 transmembrane proteins (T component). May be able to interact with more than 1 S component at a time.

It is found in the cell membrane. With respect to regulation, inhibited by excess of riboflavin or FMN. Also inhibited by protonophores such as CCCP and FCCP or in the absence of glucose. Functionally, mediates uptake of riboflavin and roseoflavin, a toxic riboflavin analog; may also transport FMN. Probably a riboflavin-binding protein that interacts with the energy-coupling factor (ECF) ABC-transporter complex. Unlike classic ABC transporters this ECF transporter provides the energy necessary to transport a number of different substrates. The substrates themselves are bound by transmembrane, not extracytoplasmic soluble proteins. The sequence is that of Riboflavin transporter FmnP (fmnP) from Bacillus subtilis (strain 168).